Reading from the N-terminus, the 239-residue chain is MNEDIKNNLNNLDEFSGKIIVGLDEAGRGPVIGPMVIASVKINEKDLYKLQDLGLKDSKQLSKKKREELYVKISEICNVKKIVIAPEKIDEQMEITNLNKIELSAFSKLANHFIKENENISIYIDACSSNEQSFSNQFKAKLINKNVEIIAEHKADENYKIVSAASIIAKVTRDNVIEEYKKTFGEIGSGYPSDPKTKKFLKKYVHENKGLPKIARKSWATSKNLLKEIEESKIFQWVK.

An RNase H type-2 domain is found at 18–231 (KIIVGLDEAG…SKNLLKEIEE (214 aa)). The a divalent metal cation site is built by aspartate 24, glutamate 25, and aspartate 125.

It belongs to the RNase HII family. Mn(2+) is required as a cofactor. Mg(2+) serves as cofactor.

It is found in the cytoplasm. The enzyme catalyses Endonucleolytic cleavage to 5'-phosphomonoester.. Functionally, endonuclease that specifically degrades the RNA of RNA-DNA hybrids. The chain is Ribonuclease HII from Methanococcus maripaludis (strain C6 / ATCC BAA-1332).